The sequence spans 128 residues: DNA-directed RNA polymerase subunit omega (128 aa).

The disordered stretch occupies residues 87–106; that stretch reads ARSSQAAPKSAPGQEIGKSF.

It belongs to the RNA polymerase subunit omega family. In terms of assembly, the RNAP catalytic core consists of 2 alpha, 1 beta, 1 beta' and 1 omega subunit. When a sigma factor is associated with the core the holoenzyme is formed, which can initiate transcription.

The enzyme catalyses RNA(n) + a ribonucleoside 5'-triphosphate = RNA(n+1) + diphosphate. Its function is as follows. Promotes RNA polymerase assembly. Latches the N- and C-terminal regions of the beta' subunit thereby facilitating its interaction with the beta and alpha subunits. The chain is DNA-directed RNA polymerase subunit omega from Anaplasma marginale (strain St. Maries).